The chain runs to 153 residues: Heavy metal-associated isoprenylated plant protein 26 (153 aa).

An HMA domain is found at 25-89 (LQTVEIKVKM…MSHRTGKKVE (65 aa)). A metal cation-binding residues include Cys36 and Cys39. Cys150 is modified (cysteine methyl ester). The S-farnesyl cysteine moiety is linked to residue Cys150. A propeptide spans 151–153 (VVM) (removed in mature form).

The protein belongs to the HIPP family. In terms of assembly, interacts with ZHD11/HB29 and ACBP2 (via ankyrin repeats). May also interact with HB21. Expressed in roots, stems and flowers. Lower expression in siliques and leaves. Expressed in the vascular tissues. Detected in lateral roots, shoot apical meristem, petals of unopened flowers and weak expression in leaf vasculature.

It is found in the nucleus membrane. It localises to the cell membrane. Heavy-metal-binding protein. Binds lead, cadmium and copper. May be involved in heavy-metal transport. May be involved in cadmium transport and play a role in cadmium detoxification. The sequence is that of Heavy metal-associated isoprenylated plant protein 26 from Arabidopsis thaliana (Mouse-ear cress).